Here is an 85-residue protein sequence, read N- to C-terminus: RNA-binding protein Hfq (85 aa).

In terms of domain architecture, Sm spans 10–70 (DAFLNQVRKE…ISTIIPQRPV (61 aa)).

Belongs to the Hfq family. Homohexamer.

RNA chaperone that binds small regulatory RNA (sRNAs) and mRNAs to facilitate mRNA translational regulation in response to envelope stress, environmental stress and changes in metabolite concentrations. Also binds with high specificity to tRNAs. The chain is RNA-binding protein Hfq from Carboxydothermus hydrogenoformans (strain ATCC BAA-161 / DSM 6008 / Z-2901).